The primary structure comprises 957 residues: Calsyntenin-3 (957 aa).

The N-terminal stretch at 1–19 is a signal peptide; that stretch reads MTPLLFPLLLASLLPSSSC. Topologically, residues 20 to 848 are extracellular; the sequence is NKANKHKPWI…SHRNSMVPSA (829 aa). Cadherin domains lie at 29–145 and 146–246; these read IEAE…APVF and VERL…KPSW. N-linked (GlcNAc...) asparagine glycosylation is found at N299, N347, and N508. The helical transmembrane segment at 849–869 threads the bilayer; it reads ATLIIVVCVGFLVLMVVLGLV. Over 870 to 957 the chain is Cytoplasmic; that stretch reads RIHSLHRRVS…RIIETPPHRY (88 aa). The disordered stretch occupies residues 919 to 957; it reads CVAGAAGGQQDDEDSSDSEAADSPSSDERRIIETPPHRY. A compositionally biased stretch (acidic residues) spans 928-938; the sequence is QDDEDSSDSEA. The span at 944-957 shows a compositional bias: basic and acidic residues; that stretch reads SDERRIIETPPHRY.

This sequence belongs to the calsyntenin family. As to quaternary structure, interacts (via cadherin domains) with both alpha and beta isoforms of neurexins (NRXN1, NRXN2 and NRXN3). Directly interacts with APBA2. Forms a tripartite complex with APBA2 and APP. Interacts with low affinity with KLC1. Interacts with SLC23A2/SVCT2. In terms of processing, proteolytically processed under normal cellular conditions. A primary zeta-cleavage generates a large extracellular (soluble) N-terminal domain (sAlc) and a short C-terminal transmembrane fragment (CTF1). A secondary cleavage catalyzed by gamma-secretase within the transmembrane domain releases the beta-Alc-beta chain in the extracellular milieu and produces an intracellular fragment (AlcICD). This processing is strongly suppressed in the tripartite complex formed with APBA2 and APP, which seems to prevent the association with gamma-secretase.

It is found in the postsynaptic cell membrane. Its subcellular location is the endoplasmic reticulum membrane. It localises to the golgi apparatus membrane. The protein resides in the cell projection. The protein localises to the dendrite. Its function is as follows. Postsynaptic adhesion molecule that binds to presynaptic neurexins to mediate both excitatory and inhibitory synapse formation. Promotes synapse development by acting as a cell adhesion molecule at the postsynaptic membrane, which associates with both neurexin-alpha and neurexin-beta proteins at the presynaptic membrane. Regulates the balance between excitatory and inhibitory synapses by inhibiting formation of excitatory parallel-fiber synapses and promoting formation of inhibitory synapses in the same neuron. May also be involved in ascorbate (vitamin C) uptake via its interaction with SLC23A2/SVCT2. Complex formation with APBA2 and APP, stabilizes APP metabolism and enhances APBA2-mediated suppression of beta-APP40 secretion, due to the retardation of intracellular APP maturation. The polypeptide is Calsyntenin-3 (CLSTN3) (Bos taurus (Bovine)).